Consider the following 164-residue polypeptide: Galectin-3 (164 aa).

The Galectin domain maps to 9 to 154 (STVDLSEPLK…FSDVLGVTVL (146 aa)). 6 residues coordinate a carbohydrate: Asn45, Arg64, Asn73, Arg81, Glu84, and Asn138.

As to quaternary structure, homotetramer. Oligomerization is required for carbohydrate binding.

The protein resides in the secreted. Its subcellular location is the extracellular space. It is found in the extracellular matrix. The protein localises to the cell wall. Its function is as follows. Binds complex carbohydrates, such as chitooligosaccharides. Does not bind lactose. May play a role in fruiting body formation. This chain is Galectin-3 (Cgl3), found in Coprinopsis cinerea (Inky cap fungus).